The sequence spans 366 residues: MNHLMFYCRPGFEKDMAAEIQDKAVALECFGFSRVADNCGFVLFECYGEQDAERLARRLPFRELIFARQMLVVIEQLNGLDLKDRITPIVEAVQKMPQFGELRVETADTNEAKELSTFCRKFSVPLRQALRAAGKLTPDVDPRRPVLHLFFLKNDSVWIGYSYPNNNSPFHMGIPRLRFPSDAPSRSTLKLEEAFYMFIPPEDDEIRLCSGLTAVDLGASPGGWTYQLVRRGMMVSAIDNGPMAESLMESGQVKHIMADGFTYRPTKKNPYWLVCDMVEKPARITHLIAQWFREGCCQEAIFNLKLPMKKRYAEVEHNLAVLKEWLAEIDGEYVIQAKQLYHDREEITVHVYDERKLARRRSGAFN.

Residues Ser-187, 220 to 223 (SPGG), Asp-239, Asp-259, and Asp-276 contribute to the S-adenosyl-L-methionine site. The Proton acceptor role is filled by Lys-305.

Belongs to the class I-like SAM-binding methyltransferase superfamily. RNA methyltransferase RlmE family. RlmM subfamily. As to quaternary structure, monomer.

The protein resides in the cytoplasm. It catalyses the reaction cytidine(2498) in 23S rRNA + S-adenosyl-L-methionine = 2'-O-methylcytidine(2498) in 23S rRNA + S-adenosyl-L-homocysteine + H(+). Its function is as follows. Catalyzes the 2'-O-methylation at nucleotide C2498 in 23S rRNA. The chain is Ribosomal RNA large subunit methyltransferase M from Tolumonas auensis (strain DSM 9187 / NBRC 110442 / TA 4).